The following is a 660-amino-acid chain: Bifunctional polymyxin resistance protein ArnA (660 aa).

A formyltransferase ArnAFT region spans residues 1–304 (MKAVVFAYHN…EMYLVEGMRF (304 aa)). The active-site Proton donor; for formyltransferase activity is the histidine 104. Residues arginine 114 and 136–140 (TVKPD) each bind (6R)-10-formyltetrahydrofolate. Positions 316-660 (RRQKVLIMGA…FLKTAVEETK (345 aa)) are dehydrogenase ArnADH. NAD(+)-binding positions include aspartate 349 and 370–371 (DI). UDP-alpha-D-glucuronate is bound by residues alanine 395, tyrosine 400, and 434–435 (TS). Glutamate 436 (proton acceptor; for decarboxylase activity) is an active-site residue. UDP-alpha-D-glucuronate is bound by residues arginine 462, asparagine 494, 528-537 (KLIDGGEQKR), and tyrosine 615. The Proton donor; for decarboxylase activity role is filled by arginine 621.

In the N-terminal section; belongs to the Fmt family. UDP-L-Ara4N formyltransferase subfamily. It in the C-terminal section; belongs to the NAD(P)-dependent epimerase/dehydratase family. UDP-glucuronic acid decarboxylase subfamily. In terms of assembly, homohexamer, formed by a dimer of trimers.

It catalyses the reaction UDP-alpha-D-glucuronate + NAD(+) = UDP-beta-L-threo-pentopyranos-4-ulose + CO2 + NADH. The catalysed reaction is UDP-4-amino-4-deoxy-beta-L-arabinose + (6R)-10-formyltetrahydrofolate = UDP-4-deoxy-4-formamido-beta-L-arabinose + (6S)-5,6,7,8-tetrahydrofolate + H(+). It functions in the pathway nucleotide-sugar biosynthesis; UDP-4-deoxy-4-formamido-beta-L-arabinose biosynthesis; UDP-4-deoxy-4-formamido-beta-L-arabinose from UDP-alpha-D-glucuronate: step 1/3. The protein operates within nucleotide-sugar biosynthesis; UDP-4-deoxy-4-formamido-beta-L-arabinose biosynthesis; UDP-4-deoxy-4-formamido-beta-L-arabinose from UDP-alpha-D-glucuronate: step 3/3. It participates in bacterial outer membrane biogenesis; lipopolysaccharide biosynthesis. Functionally, bifunctional enzyme that catalyzes the oxidative decarboxylation of UDP-glucuronic acid (UDP-GlcUA) to UDP-4-keto-arabinose (UDP-Ara4O) and the addition of a formyl group to UDP-4-amino-4-deoxy-L-arabinose (UDP-L-Ara4N) to form UDP-L-4-formamido-arabinose (UDP-L-Ara4FN). The modified arabinose is attached to lipid A and is required for resistance to polymyxin and cationic antimicrobial peptides. The polypeptide is Bifunctional polymyxin resistance protein ArnA (Shewanella sediminis (strain HAW-EB3)).